A 297-amino-acid polypeptide reads, in one-letter code: HTH-type transcriptional regulator ArgP (297 aa).

An HTH lysR-type domain is found at 4 to 60 (PDYRTLQALDAVIRERGFERAAQKLCITQSAVSQRIKQLENMFGQPLLVRTVPPRPT). The segment at residues 21–40 (FERAAQKLCITQSAVSQRIK) is a DNA-binding region (H-T-H motif).

It belongs to the LysR transcriptional regulatory family. In terms of assembly, homodimer.

Controls the transcription of genes involved in arginine and lysine metabolism. The sequence is that of HTH-type transcriptional regulator ArgP from Salmonella dublin (strain CT_02021853).